The chain runs to 331 residues: UDP-GalNAc:beta-1,3-N-acetylgalactosaminyltransferase 1 (331 aa).

Topologically, residues 1–20 (MASALWTVLPSRMSLRSLQW) are cytoplasmic. The helical; Signal-anchor for type II membrane protein transmembrane segment at 21-43 (SLLLLSLLSFLVMWYLSLPHYNV) threads the bilayer. Residues 44–331 (IERVNWMYFY…VMLRNTTCHY (288 aa)) are Lumenal-facing. Asn72, Asn154, Asn198, Asn212, and Asn326 each carry an N-linked (GlcNAc...) asparagine glycan.

Belongs to the glycosyltransferase 31 family. Requires Mg(2+) as cofactor.

It is found in the golgi apparatus membrane. The enzyme catalyses a globoside Gb3Cer (d18:1(4E)) + UDP-N-acetyl-alpha-D-galactosamine = a globoside Gb4Cer (d18:1(4E)) + UDP + H(+). It functions in the pathway protein modification; protein glycosylation. In terms of biological role, transfers N-acetylgalactosamine onto globotriaosylceramide. Plays a critical role in preimplantation stage embryonic development. In Pongo abelii (Sumatran orangutan), this protein is UDP-GalNAc:beta-1,3-N-acetylgalactosaminyltransferase 1 (B3GALNT1).